A 240-amino-acid polypeptide reads, in one-letter code: 4-hydroxy-tetrahydrodipicolinate reductase (240 aa).

NAD(+) is bound by residues 79–81 and 103–106; these read ATT and SANM. Catalysis depends on His-135, which acts as the Proton donor/acceptor. His-136 is a binding site for (S)-2,3,4,5-tetrahydrodipicolinate. Catalysis depends on Lys-139, which acts as the Proton donor. 145-146 provides a ligand contact to (S)-2,3,4,5-tetrahydrodipicolinate; that stretch reads GT.

It belongs to the DapB family.

The protein localises to the cytoplasm. The catalysed reaction is (S)-2,3,4,5-tetrahydrodipicolinate + NAD(+) + H2O = (2S,4S)-4-hydroxy-2,3,4,5-tetrahydrodipicolinate + NADH + H(+). It carries out the reaction (S)-2,3,4,5-tetrahydrodipicolinate + NADP(+) + H2O = (2S,4S)-4-hydroxy-2,3,4,5-tetrahydrodipicolinate + NADPH + H(+). The protein operates within amino-acid biosynthesis; L-lysine biosynthesis via DAP pathway; (S)-tetrahydrodipicolinate from L-aspartate: step 4/4. Its function is as follows. Catalyzes the conversion of 4-hydroxy-tetrahydrodipicolinate (HTPA) to tetrahydrodipicolinate. In Staphylococcus aureus (strain USA300), this protein is 4-hydroxy-tetrahydrodipicolinate reductase.